The primary structure comprises 204 residues: Peptidyl-prolyl cis-trans isomerase CYP20-1 (204 aa).

The first 23 residues, 1 to 23 (MASSVTLLLWSLLLLGTLSAIQA), serve as a signal peptide directing secretion. Positions 38-201 (YFDVEIDGKA…SKVVIVDSGE (164 aa)) constitute a PPIase cyclophilin-type domain.

This sequence belongs to the cyclophilin-type PPIase family. As to quaternary structure, interacts with the PP2A A subunit PP2AA1/RCN1. Ubiquitous, mostly in aerial organs. Higher levels in leaf and buds, and lower levels in seedlings.

It is found in the endoplasmic reticulum. The protein resides in the secreted. The enzyme catalyses [protein]-peptidylproline (omega=180) = [protein]-peptidylproline (omega=0). Its activity is regulated as follows. Binds cyclosporin A (CsA). CsA mediates some of its effects via an inhibitory action on PPIase. In terms of biological role, PPIases accelerate the folding of proteins. It catalyzes the cis-trans isomerization of proline imidic peptide bonds in oligopeptides. Seems to be involved in root development. The sequence is that of Peptidyl-prolyl cis-trans isomerase CYP20-1 (CYP20-1) from Arabidopsis thaliana (Mouse-ear cress).